A 340-amino-acid polypeptide reads, in one-letter code: Ketol-acid reductoisomerase (NADP(+)) (340 aa).

Residues V3–T182 form the KARI N-terminal Rossmann domain. Residues Y26–Q29, R49, S53, and D83–Q86 contribute to the NADP(+) site. Residue H108 is part of the active site. Residue G134 participates in NADP(+) binding. The region spanning T183 to T328 is the KARI C-terminal knotted domain. D191, E195, E227, and E231 together coordinate Mg(2+). S252 is a binding site for substrate.

Belongs to the ketol-acid reductoisomerase family. It depends on Mg(2+) as a cofactor.

The enzyme catalyses (2R)-2,3-dihydroxy-3-methylbutanoate + NADP(+) = (2S)-2-acetolactate + NADPH + H(+). It carries out the reaction (2R,3R)-2,3-dihydroxy-3-methylpentanoate + NADP(+) = (S)-2-ethyl-2-hydroxy-3-oxobutanoate + NADPH + H(+). Its pathway is amino-acid biosynthesis; L-isoleucine biosynthesis; L-isoleucine from 2-oxobutanoate: step 2/4. It functions in the pathway amino-acid biosynthesis; L-valine biosynthesis; L-valine from pyruvate: step 2/4. Involved in the biosynthesis of branched-chain amino acids (BCAA). Catalyzes an alkyl-migration followed by a ketol-acid reduction of (S)-2-acetolactate (S2AL) to yield (R)-2,3-dihydroxy-isovalerate. In the isomerase reaction, S2AL is rearranged via a Mg-dependent methyl migration to produce 3-hydroxy-3-methyl-2-ketobutyrate (HMKB). In the reductase reaction, this 2-ketoacid undergoes a metal-dependent reduction by NADPH to yield (R)-2,3-dihydroxy-isovalerate. The chain is Ketol-acid reductoisomerase (NADP(+)) from Lactococcus lactis subsp. cremoris (strain SK11).